Consider the following 461-residue polypeptide: Photosystem II CP43 reaction center protein (461 aa).

Positions 1-2 (ME) are excised as a propeptide. An N-acetylthreonine modification is found at T3. Phosphothreonine is present on T3. Helical transmembrane passes span 57-81 (LFEVAHFVPEKPMYEQGLILLPHIA), 122-143 (LIGPETLEESFPFFGYIWKDKN), 166-188 (KAMYFGGVYDTWAAGGGDVRIIS), 243-263 (KPWGWARRAFVWSGEAYLSYS), and 279-300 (WFNNTAYPSEFYGPTGPEASQA). A [CaMn4O5] cluster-binding site is contributed by E355. A helical membrane pass occupies residues 435–459 (RARAAAAGFEKGIDRDTEPVLSMKP).

Belongs to the PsbB/PsbC family. PsbC subfamily. In terms of assembly, PSII is composed of 1 copy each of membrane proteins PsbA, PsbB, PsbC, PsbD, PsbE, PsbF, PsbH, PsbI, PsbJ, PsbK, PsbL, PsbM, PsbT, PsbX, PsbY, PsbZ, Psb30/Ycf12, at least 3 peripheral proteins of the oxygen-evolving complex and a large number of cofactors. It forms dimeric complexes. Requires Binds multiple chlorophylls and provides some of the ligands for the Ca-4Mn-5O cluster of the oxygen-evolving complex. It may also provide a ligand for a Cl- that is required for oxygen evolution. PSII binds additional chlorophylls, carotenoids and specific lipids. as cofactor.

The protein resides in the plastid. The protein localises to the chloroplast thylakoid membrane. One of the components of the core complex of photosystem II (PSII). It binds chlorophyll and helps catalyze the primary light-induced photochemical processes of PSII. PSII is a light-driven water:plastoquinone oxidoreductase, using light energy to abstract electrons from H(2)O, generating O(2) and a proton gradient subsequently used for ATP formation. This Oltmannsiellopsis viridis (Marine flagellate) protein is Photosystem II CP43 reaction center protein.